The following is a 73-amino-acid chain: Large ribosomal subunit protein uL29 (73 aa).

A disordered region spans residues 1–20 (MYKAKDLRDQSLEELEATHD).

It belongs to the universal ribosomal protein uL29 family.

This Protochlamydia amoebophila (strain UWE25) protein is Large ribosomal subunit protein uL29.